Consider the following 562-residue polypeptide: Adenylate kinase isoenzyme 5 (562 aa).

Adenylate kinase stretches follow at residues 133-316 and 377-559; these read KIIL…VAVD and KIIF…TAID. 142-147 lines the ATP pocket; that stretch reads GSGKGT. An NMP 1 region spans residues 162–193; sequence SVGELLRKKIHSASSNRKWSLIAKIITNGELA. AMP-binding positions include R168, 191–193, 219–222, and Q226; these read ELA and GFPR. The LID 1 stretch occupies residues 256–266; the sequence is KRAEQQGRPDD. R257 provides a ligand contact to ATP. AMP contacts are provided by R263 and R274. 386–391 contributes to the ATP binding site; that stretch reads GSGKGT. An NMP 2 region spans residues 406 to 435; it reads STGELLRQELTSESERSKLIRDIMERGDLV. AMP-binding positions include T407, R412, 433-435, 462-465, and Q469; these read DLV and GYPR. Residues 499–509 are LID 2; sequence QRSQSSQRGED. An ATP-binding site is contributed by R500. 2 residues coordinate AMP: R506 and R517. G545 is an ATP binding site.

Belongs to the adenylate kinase family. In terms of assembly, monomer. Interacts with YWHAZ. As to expression, brain specific.

The protein resides in the cytoplasm. The enzyme catalyses AMP + ATP = 2 ADP. It carries out the reaction a 2'-deoxyribonucleoside 5'-diphosphate + ATP = a 2'-deoxyribonucleoside 5'-triphosphate + ADP. The catalysed reaction is a ribonucleoside 5'-diphosphate + ATP = a ribonucleoside 5'-triphosphate + ADP. Functionally, nucleoside monophosphate (NMP) kinase that catalyzes the reversible transfer of the terminal phosphate group between nucleoside triphosphates and monophosphates. Active on AMP and dAMP with ATP as a donor. When GTP is used as phosphate donor, the enzyme phosphorylates AMP, CMP, and to a small extent dCMP. Also displays broad nucleoside diphosphate kinase activity. The polypeptide is Adenylate kinase isoenzyme 5 (Ak5) (Mus musculus (Mouse)).